The chain runs to 293 residues: 4-diphosphocytidyl-2-C-methyl-D-erythritol kinase (293 aa).

The active site involves Lys16. 99–109 (PMGAGLGGGSS) is a binding site for ATP. Asp141 is an active-site residue.

This sequence belongs to the GHMP kinase family. IspE subfamily.

It carries out the reaction 4-CDP-2-C-methyl-D-erythritol + ATP = 4-CDP-2-C-methyl-D-erythritol 2-phosphate + ADP + H(+). Its pathway is isoprenoid biosynthesis; isopentenyl diphosphate biosynthesis via DXP pathway; isopentenyl diphosphate from 1-deoxy-D-xylulose 5-phosphate: step 3/6. Its function is as follows. Catalyzes the phosphorylation of the position 2 hydroxy group of 4-diphosphocytidyl-2C-methyl-D-erythritol. The sequence is that of 4-diphosphocytidyl-2-C-methyl-D-erythritol kinase from Burkholderia pseudomallei (strain 668).